Here is a 254-residue protein sequence, read N- to C-terminus: uncharacterized protein (254 aa).

The next 8 membrane-spanning stretches (helical) occupy residues 41–61 (LFVF…IKII), 64–84 (ILQA…EYFF), 91–111 (IYCG…LYIL), 125–145 (LLIS…FVLA), 146–166 (PAAL…LWSF), 172–192 (FILL…IQLL), 204–224 (MIRA…ILTP), and 232–252 (LIMS…LLVL).

This sequence belongs to the TatC family.

It is found in the plastid. Its subcellular location is the chloroplast membrane. This is an uncharacterized protein from Pyropia yezoensis (Susabi-nori).